Here is a 241-residue protein sequence, read N- to C-terminus: Ribonuclease HII (241 aa).

Residues 57–241 (NFIAGVDEAG…RTYVEKILKG (185 aa)) form the RNase H type-2 domain. 3 residues coordinate a divalent metal cation: Asp63, Glu64, and Asp155.

It belongs to the RNase HII family. Requires Mn(2+) as cofactor. Mg(2+) is required as a cofactor.

The protein resides in the cytoplasm. It carries out the reaction Endonucleolytic cleavage to 5'-phosphomonoester.. Functionally, endonuclease that specifically degrades the RNA of RNA-DNA hybrids. This is Ribonuclease HII from Caldanaerobacter subterraneus subsp. tengcongensis (strain DSM 15242 / JCM 11007 / NBRC 100824 / MB4) (Thermoanaerobacter tengcongensis).